A 966-amino-acid polypeptide reads, in one-letter code: Alanine--tRNA ligase (966 aa).

Histidine 646, histidine 650, cysteine 750, and histidine 754 together coordinate Zn(2+). The interval 927-949 (DRLGGGGGGRPSLASAGGRDPEA) is disordered.

The protein belongs to the class-II aminoacyl-tRNA synthetase family. Zn(2+) is required as a cofactor.

It localises to the cytoplasm. The catalysed reaction is tRNA(Ala) + L-alanine + ATP = L-alanyl-tRNA(Ala) + AMP + diphosphate. Catalyzes the attachment of alanine to tRNA(Ala) in a two-step reaction: alanine is first activated by ATP to form Ala-AMP and then transferred to the acceptor end of tRNA(Ala). Also edits incorrectly charged Ser-tRNA(Ala) and Gly-tRNA(Ala) via its editing domain. The sequence is that of Alanine--tRNA ligase from Salinibacter ruber (strain DSM 13855 / M31).